Here is a 226-residue protein sequence, read N- to C-terminus: Biosynthetic peptidoglycan transglycosylase (226 aa).

A helical transmembrane segment spans residues 5–25 (IGVTVLAVVGLLLLPYLLTPL).

Belongs to the glycosyltransferase 51 family.

The protein localises to the cell inner membrane. The enzyme catalyses [GlcNAc-(1-&gt;4)-Mur2Ac(oyl-L-Ala-gamma-D-Glu-L-Lys-D-Ala-D-Ala)](n)-di-trans,octa-cis-undecaprenyl diphosphate + beta-D-GlcNAc-(1-&gt;4)-Mur2Ac(oyl-L-Ala-gamma-D-Glu-L-Lys-D-Ala-D-Ala)-di-trans,octa-cis-undecaprenyl diphosphate = [GlcNAc-(1-&gt;4)-Mur2Ac(oyl-L-Ala-gamma-D-Glu-L-Lys-D-Ala-D-Ala)](n+1)-di-trans,octa-cis-undecaprenyl diphosphate + di-trans,octa-cis-undecaprenyl diphosphate + H(+). The protein operates within cell wall biogenesis; peptidoglycan biosynthesis. Its function is as follows. Peptidoglycan polymerase that catalyzes glycan chain elongation from lipid-linked precursors. The sequence is that of Biosynthetic peptidoglycan transglycosylase from Nitrobacter hamburgensis (strain DSM 10229 / NCIMB 13809 / X14).